Here is a 332-residue protein sequence, read N- to C-terminus: Adenosine receptor A2b (332 aa).

The Extracellular segment spans residues 1 to 8 (MLLETQDA). A helical transmembrane segment spans residues 9–33 (LYVALELVIAALSVAGNVLVCAAVG). Over 34–43 (TANTLQTPTN) the chain is Cytoplasmic. The helical transmembrane segment at 44–67 (YFLVSLAAADVAVGLFAIPFAITI) threads the bilayer. The Extracellular segment spans residues 68–78 (SLGFCTDFYGC). Cys-78 and Cys-171 are oxidised to a cystine. The helical transmembrane segment at 79–101 (LFLACFVLVLTQSSIFSLLAVAV) threads the bilayer. The Cytoplasmic segment spans residues 102-121 (DRYLAICVPLRYKSLVTGTR). The chain crosses the membrane as a helical span at residues 122-144 (ARGVIAVLWVLAFGIGLTPFLGW). At 145-178 (NSKDSATNNCTEPWDGTTNESCCLVKCLFENVVP) the chain is on the extracellular side. Residues Asn-153 and Asn-163 are each glycosylated (N-linked (GlcNAc...) asparagine). Glu-174 contacts adenosine. Residues 179-203 (MSYMVYFNFFGCVLPPLLIMLVIYI) traverse the membrane as a helical segment. At 204–235 (KIFLVACRQLQRTELMDHSRTTLQREIHAAKS) the chain is on the cytoplasmic side. A helical membrane pass occupies residues 236–259 (LAMIVGIFALCWLPVHAVNCVTLF). Asn-254 contacts adenosine. The Extracellular segment spans residues 260–267 (QPAQGKNK). A helical transmembrane segment spans residues 268 to 291 (PKWAMNMAILLSHANSVVNPIVYA). Positions 279 and 280 each coordinate adenosine. The Cytoplasmic portion of the chain corresponds to 292–332 (YRNRDFRYTFHKIISRYLLCQADVKSGNGQAGVQPALGVGL). Cys-311 carries S-palmitoyl cysteine lipidation.

Belongs to the G-protein coupled receptor 1 family.

The protein localises to the cell membrane. Functionally, receptor for adenosine. The activity of this receptor is mediated by G proteins which activate adenylyl cyclase. The protein is Adenosine receptor A2b (ADORA2B) of Homo sapiens (Human).